The chain runs to 83 residues: Bublin coiled-coil protein (83 aa).

The interval 1–25 (MSGPNGDLGTPVEAGAEGEEDGFGE) is disordered. Residues 25–74 (EAEYAAINSMLDQINSCLDHLEEKNDHLHARLQELLESNRQTRLEFQQQL) adopt a coiled-coil conformation. Ser82 carries the phosphoserine modification.

The protein belongs to the UPF0184 (EST00098) family.

Its subcellular location is the cell junction. The protein localises to the cytoplasm. It is found in the cytoskeleton. Its function is as follows. Essential for intermediate filament organization in intestinal cells, interacts with intermediate filament and regulates intestinal lumen morphology. The chain is Bublin coiled-coil protein (BBLN) from Bos taurus (Bovine).